We begin with the raw amino-acid sequence, 148 residues long: Probable glycine cleavage system H protein 2 (148 aa).

The Lipoyl-binding domain maps to 32-114; it reads TIVVGITDLA…YGKGWLVKMK (83 aa). Lysine 73 carries the post-translational modification N6-lipoyllysine.

The protein belongs to the GcvH family. In terms of assembly, the glycine cleavage system is composed of four proteins: P, T, L and H. (R)-lipoate serves as cofactor.

Its function is as follows. The glycine cleavage system catalyzes the degradation of glycine. The H protein shuttles the methylamine group of glycine from the P protein to the T protein. This chain is Probable glycine cleavage system H protein 2, found in Saccharolobus solfataricus (strain ATCC 35092 / DSM 1617 / JCM 11322 / P2) (Sulfolobus solfataricus).